Here is a 509-residue protein sequence, read N- to C-terminus: Maturase K (509 aa).

The protein belongs to the intron maturase 2 family. MatK subfamily.

It is found in the plastid. Its subcellular location is the chloroplast. Its function is as follows. Usually encoded in the trnK tRNA gene intron. Probably assists in splicing its own and other chloroplast group II introns. The polypeptide is Maturase K (Clematis vitalba (Evergreen clematis)).